We begin with the raw amino-acid sequence, 549 residues long: Chaperonin GroEL (549 aa).

ATP is bound by residues 29-32 (TLGP), lysine 50, 86-90 (DGTTT), glycine 414, 478-480 (NAA), and aspartate 494.

The protein belongs to the chaperonin (HSP60) family. Forms a cylinder of 14 subunits composed of two heptameric rings stacked back-to-back. Interacts with the co-chaperonin GroES.

The protein localises to the cytoplasm. The catalysed reaction is ATP + H2O + a folded polypeptide = ADP + phosphate + an unfolded polypeptide.. Together with its co-chaperonin GroES, plays an essential role in assisting protein folding. The GroEL-GroES system forms a nano-cage that allows encapsulation of the non-native substrate proteins and provides a physical environment optimized to promote and accelerate protein folding. The polypeptide is Chaperonin GroEL (Psychrobacter cryohalolentis (strain ATCC BAA-1226 / DSM 17306 / VKM B-2378 / K5)).